The chain runs to 225 residues: Ras-related protein Rab-32 (225 aa).

A2 is subject to N-acetylalanine. The GTP site is built by V36, G37, K38, T39, S40, S51, Q52, Y54, and T57. T39 contacts Mg(2+). The Switch 1 motif lies at 48-62; that stretch reads QLFSQHYRATIGVDF. T57 contributes to the Mg(2+) binding site. S71 carries the post-translational modification Phosphoserine. D81 contacts Mg(2+). GTP-binding residues include G84, N143, K144, D146, A175, and K176. Positions 84–97 match the Switch 2 motif; that stretch reads GQERFGNMTRVYYK. The segment at 178 to 197 is PKA-RII subunit binding domain; it reads NINIEEAARFLVEKILVNHQ. S-geranylgeranyl cysteine attachment occurs at residues C224 and C225.

The protein belongs to the small GTPase superfamily. Rab family. In terms of assembly, interacts with ANKRD27. A decreased interaction with ANKRD27 seen in the presence of SGSM2. Interacts with LRRK2 (via N-terminus); this interaction results in stimulation of RAB10 phosphorylation by LRRK2. Mg(2+) is required as a cofactor. In terms of tissue distribution, widely expressed with high levels in heart, liver, kidney, bone marrow, testis, colon and fetal lung.

The protein resides in the mitochondrion. The protein localises to the mitochondrion outer membrane. It localises to the cytoplasmic vesicle. Its subcellular location is the phagosome. It is found in the phagosome membrane. The protein resides in the melanosome. The protein localises to the melanosome membrane. It catalyses the reaction GTP + H2O = GDP + phosphate + H(+). Regulated by guanine the nucleotide exchange factor (GEF) BLOC-3 complex composed of HPS1 and HPS4 which promote the exchange of bound GDP for free GTP. Regulated by the GTPase activating protein (GAP) SGSM2/RUTBC1 which increases the GTP hydrolysis activity. Inhibited by GDP dissociation inhibitors (GDIs) which prevent Rab-GDP dissociation. Functionally, the small GTPases Rab are key regulators of intracellular membrane trafficking, from the formation of transport vesicles to their fusion with membranes. Rabs cycle between an inactive GDP-bound form and an active GTP-bound form that is able to recruit to membranes different set of downstream effectors directly responsible for vesicle formation, movement, tethering and fusion. Also acts as an A-kinase anchoring protein by binding to the type II regulatory subunit of protein kinase A and anchoring it to the mitochondrion. Also involved in synchronization of mitochondrial fission. Plays a role in the maturation of phagosomes that engulf pathogens, such as S.aureus and M.tuberculosis. Plays an important role in the control of melanin production and melanosome biogenesis. In concert with RAB38, regulates the proper trafficking of melanogenic enzymes TYR, TYRP1 and DCT/TYRP2 to melanosomes in melanocytes. Stimulates phosphorylation of RAB10 'Thr-73' by LRRK2. The chain is Ras-related protein Rab-32 from Homo sapiens (Human).